The chain runs to 637 residues: E3 ubiquitin-protein ligase CHFR (637 aa).

The region spanning 31–82 (CTVGRKKDCDLSFPANKLVSGNHCKITHDQNSGKVWLEDMSTNGTVINMSKV) is the FHA domain. Disordered stretches follow at residues 120 to 172 (ESAS…SSSL) and 193 to 267 (SSSA…EGAT). Acidic residues predominate over residues 130–142 (GREEDSDLTETES). Residues 193-210 (SSSAVCKGDSTSSGSPAQ) show a composition bias toward polar residues. A compositionally biased stretch (basic and acidic residues) spans 258 to 267 (SGKEKTEGAT). Residues 277-316 (CIICQDLLYDCISVQPCMHTFCAACYSGWMERSSFCPTCR) form an RING-type zinc finger. The interval 428–447 (KTAGDGPSTSSDSTTAAPQE) is disordered. Low complexity predominate over residues 429-445 (TAGDGPSTSSDSTTAAP). The PBZ-type zinc-finger motif lies at 606–628 (PNCYWGRNCRTQVKAHHALKFNH).

Belongs to the CHFR family.

The protein localises to the nucleus. The protein resides in the PML body. It carries out the reaction S-ubiquitinyl-[E2 ubiquitin-conjugating enzyme]-L-cysteine + [acceptor protein]-L-lysine = [E2 ubiquitin-conjugating enzyme]-L-cysteine + N(6)-ubiquitinyl-[acceptor protein]-L-lysine.. It participates in protein modification; protein ubiquitination. In terms of biological role, E3 ubiquitin-protein ligase that functions in the antephase checkpoint by actively delaying passage into mitosis in response to microtubule poisons. Acts in early prophase before chromosome condensation, when the centrosome move apart from each other along the periphery of the nucleus. Probably involved in signaling the presence of mitotic stress caused by microtubule poisons by mediating the 'Lys-48'-linked ubiquitination of target proteins, leading to their degradation by the proteasome. May also promote the formation of 'Lys-63'-linked polyubiquitin chains and functions with the specific ubiquitin-conjugating ubc13-mms2 (ube2n-ube2v2) heterodimer. Substrates that are polyubiquitinated at 'Lys-63' are usually not targeted for degradation, but are rather involved in signaling cellular stress. The protein is E3 ubiquitin-protein ligase CHFR (chfr) of Danio rerio (Zebrafish).